The chain runs to 85 residues: Large ribosomal subunit protein bL27 (85 aa).

The protein belongs to the bacterial ribosomal protein bL27 family.

This is Large ribosomal subunit protein bL27 from Leptospira biflexa serovar Patoc (strain Patoc 1 / Ames).